A 315-amino-acid chain; its full sequence is Peroxidase 4 (315 aa).

Positions 1–19 (MAIFKILVLLLSLCCFSQA) are cleaved as a signal peptide. The residue at position 20 (glutamine 20) is a Pyrrolidone carboxylic acid. 4 cysteine pairs are disulfide-bonded: cysteine 30–cysteine 110, cysteine 63–cysteine 68, cysteine 116–cysteine 311, and cysteine 195–cysteine 221. Histidine 61 functions as the Proton acceptor in the catalytic mechanism. Residues aspartate 62, valine 65, glycine 67, aspartate 69, and serine 71 each contribute to the Ca(2+) site. Proline 158 lines the substrate pocket. Histidine 188 lines the heme b pocket. Residue threonine 189 participates in Ca(2+) binding. Asparagine 205 carries an N-linked (GlcNAc...) asparagine glycan. Residues aspartate 234, threonine 237, and aspartate 242 each contribute to the Ca(2+) site.

It belongs to the peroxidase family. Classical plant (class III) peroxidase subfamily. Heme b serves as cofactor. Ca(2+) is required as a cofactor.

It is found in the secreted. It catalyses the reaction 2 a phenolic donor + H2O2 = 2 a phenolic radical donor + 2 H2O. Its function is as follows. Removal of H(2)O(2), oxidation of toxic reductants, biosynthesis and degradation of lignin, suberization, auxin catabolism, response to environmental stresses such as wounding, pathogen attack and oxidative stress. These functions might be dependent on each isozyme/isoform in each plant tissue. The polypeptide is Peroxidase 4 (PER4) (Arabidopsis thaliana (Mouse-ear cress)).